A 992-amino-acid polypeptide reads, in one-letter code: ATP-dependent DNA helicase PIF7 (992 aa).

Residues 1-21 (MWDGPLRSRQNLRTVAKLRSS) constitute a mitochondrion transit peptide. 3 disordered regions span residues 20–43 (SSGC…GETA), 145–182 (TVNK…TAAS), and 190–209 (LDSS…AVTQ). 3 stretches are compositionally biased toward polar residues: residues 23 to 43 (CPLT…GETA), 173 to 182 (NVDNTTTAAS), and 191 to 208 (DSSS…QAVT). 237-244 (GGAGTGKS) provides a ligand contact to ATP. The DNA-binding element occupies 651 to 670 (QAYVALSRCTDVANLVIENF).

The protein belongs to the helicase family. PIF1 subfamily. As to quaternary structure, monomer. The cofactor is Mg(2+).

Its subcellular location is the mitochondrion matrix. It is found in the kinetoplast. It carries out the reaction Couples ATP hydrolysis with the unwinding of duplex DNA at the replication fork by translocating in the 5'-3' direction. This creates two antiparallel DNA single strands (ssDNA). The leading ssDNA polymer is the template for DNA polymerase III holoenzyme which synthesizes a continuous strand.. The catalysed reaction is ATP + H2O = ADP + phosphate + H(+). DNA-dependent ATPase and 5'-3' DNA helicase required for the maintenance of mitochondrial (kinetoplast) genome stability. This chain is ATP-dependent DNA helicase PIF7, found in Trypanosoma brucei brucei (strain 927/4 GUTat10.1).